Consider the following 246-residue polypeptide: Hydroxyacylglutathione hydrolase (246 aa).

Zn(2+)-binding residues include His-58, His-60, Asp-62, His-63, His-117, Asp-137, and His-175.

Belongs to the metallo-beta-lactamase superfamily. Glyoxalase II family. In terms of assembly, monomer. Zn(2+) serves as cofactor.

It carries out the reaction an S-(2-hydroxyacyl)glutathione + H2O = a 2-hydroxy carboxylate + glutathione + H(+). It participates in secondary metabolite metabolism; methylglyoxal degradation; (R)-lactate from methylglyoxal: step 2/2. Thiolesterase that catalyzes the hydrolysis of S-D-lactoyl-glutathione to form glutathione and D-lactic acid. This chain is Hydroxyacylglutathione hydrolase, found in Prochlorococcus marinus (strain MIT 9301).